Consider the following 394-residue polypeptide: 1-deoxy-D-xylulose 5-phosphate reductoisomerase (394 aa).

Residues Thr-12, Gly-13, Ser-14, Ile-15, Gly-38, Asn-41, and Asn-132 each contribute to the NADPH site. Lys-133 provides a ligand contact to 1-deoxy-D-xylulose 5-phosphate. Glu-134 contacts NADPH. Residue Asp-156 coordinates Mn(2+). Ser-157, Glu-158, Ser-182, and His-205 together coordinate 1-deoxy-D-xylulose 5-phosphate. Residue Glu-158 coordinates Mn(2+). Gly-211 lines the NADPH pocket. The 1-deoxy-D-xylulose 5-phosphate site is built by Ser-218, Asn-223, Lys-224, and Glu-227. A Mn(2+)-binding site is contributed by Glu-227.

This sequence belongs to the DXR family. Mg(2+) serves as cofactor. Requires Mn(2+) as cofactor.

The catalysed reaction is 2-C-methyl-D-erythritol 4-phosphate + NADP(+) = 1-deoxy-D-xylulose 5-phosphate + NADPH + H(+). It functions in the pathway isoprenoid biosynthesis; isopentenyl diphosphate biosynthesis via DXP pathway; isopentenyl diphosphate from 1-deoxy-D-xylulose 5-phosphate: step 1/6. Functionally, catalyzes the NADPH-dependent rearrangement and reduction of 1-deoxy-D-xylulose-5-phosphate (DXP) to 2-C-methyl-D-erythritol 4-phosphate (MEP). The sequence is that of 1-deoxy-D-xylulose 5-phosphate reductoisomerase from Arthrobacter sp. (strain FB24).